Here is a 207-residue protein sequence, read N- to C-terminus: LexA repressor (207 aa).

A DNA-binding region (H-T-H motif) is located at residues 28–48; it reads RAEIAQKLGFKSANAAEEHLK. Residues Ser-124 and Lys-161 each act as for autocatalytic cleavage activity in the active site.

The protein belongs to the peptidase S24 family. As to quaternary structure, homodimer.

The enzyme catalyses Hydrolysis of Ala-|-Gly bond in repressor LexA.. Represses a number of genes involved in the response to DNA damage (SOS response), including recA and lexA. In the presence of single-stranded DNA, RecA interacts with LexA causing an autocatalytic cleavage which disrupts the DNA-binding part of LexA, leading to derepression of the SOS regulon and eventually DNA repair. This Aeromonas salmonicida (strain A449) protein is LexA repressor.